The following is a 275-amino-acid chain: Shikimate dehydrogenase (NADP(+)) (275 aa).

Shikimate-binding positions include 19–21 (SIS) and T66. The Proton acceptor role is filled by K70. Position 82 (E82) interacts with NADP(+). Shikimate contacts are provided by N91 and D106. NADP(+) is bound by residues 129–133 (GAGGA), 153–158 (NRTYER), and I219. Y221 lines the shikimate pocket. Position 242 (G242) interacts with NADP(+).

Belongs to the shikimate dehydrogenase family. Homodimer.

It carries out the reaction shikimate + NADP(+) = 3-dehydroshikimate + NADPH + H(+). It participates in metabolic intermediate biosynthesis; chorismate biosynthesis; chorismate from D-erythrose 4-phosphate and phosphoenolpyruvate: step 4/7. Its function is as follows. Involved in the biosynthesis of the chorismate, which leads to the biosynthesis of aromatic amino acids. Catalyzes the reversible NADPH linked reduction of 3-dehydroshikimate (DHSA) to yield shikimate (SA). In Dictyoglomus turgidum (strain DSM 6724 / Z-1310), this protein is Shikimate dehydrogenase (NADP(+)).